Reading from the N-terminus, the 258-residue chain is Snake venom serine protease BPA (258 aa).

An N-terminal signal peptide occupies residues 1–18; sequence MVLIRVIANLLILQLSNA. Residues 19-24 constitute a propeptide that is removed on maturation; sequence QKSSEL. The Peptidase S1 domain occupies 25–249; that stretch reads VIGGDECNIT…YLPWIQSIIA (225 aa). Intrachain disulfides connect Cys-31–Cys-163, Cys-50–Cys-66, Cys-98–Cys-256, Cys-142–Cys-210, Cys-174–Cys-189, and Cys-200–Cys-225. Asn-32 and Asn-44 each carry an N-linked (GlcNAc...) asparagine glycan. The active-site Charge relay system is the His-65. An N-linked (GlcNAc...) asparagine glycan is attached at Asn-103. Asp-110 serves as the catalytic Charge relay system. N-linked (GlcNAc...) asparagine glycosylation is present at Asn-121. O-linked (GalNAc...) serine glycosylation is present at Ser-133. Residues Asn-154 and Asn-170 are each glycosylated (N-linked (GlcNAc...) asparagine). Ser-204 serves as the catalytic Charge relay system. Residues Asn-211 and Asn-251 are each glycosylated (N-linked (GlcNAc...) asparagine). The O-linked (GalNAc...) threonine glycan is linked to Thr-255.

Belongs to the peptidase S1 family. Snake venom subfamily. Monomer. In terms of processing, N- and O-glycosylated. The glycosylation has a stabilizing effect on the protein. However, the removal of part of the carbohydrates enhances the proteolytic activity of the SVSP towards human and rat fibrinogen. In terms of tissue distribution, expressed by the venom gland.

Its subcellular location is the secreted. Inhibited by diisopropylfluorophosphate (DFP), but not by SBTI, Antithrombin III/heparin and BPTI, probably due to steric hindrance caused by its huge carbohydrate moietie. Its function is as follows. Snake venom serine protease that has a potent and selective fibrinogenolytic activity. Preferentially cleaves the alpha-chain (FGA) of human and rat fibrinogen at Arg-|-Gly bonds, and slowly digests the beta-chain (FGB). In vivo, completely avoids thrombus formation induced in rat, decreases the fibrinogen plasma level and prolonges the recalcification time. Possesses esterolytic and amidolytic activities. The sequence is that of Snake venom serine protease BPA from Bothrops jararaca (Jararaca).